We begin with the raw amino-acid sequence, 144 residues long: 3-hydroxyacyl-[acyl-carrier-protein] dehydratase FabZ (144 aa).

His48 is a catalytic residue.

The protein belongs to the thioester dehydratase family. FabZ subfamily.

It localises to the cytoplasm. The enzyme catalyses a (3R)-hydroxyacyl-[ACP] = a (2E)-enoyl-[ACP] + H2O. Functionally, involved in unsaturated fatty acids biosynthesis. Catalyzes the dehydration of short chain beta-hydroxyacyl-ACPs and long chain saturated and unsaturated beta-hydroxyacyl-ACPs. This chain is 3-hydroxyacyl-[acyl-carrier-protein] dehydratase FabZ, found in Listeria innocua serovar 6a (strain ATCC BAA-680 / CLIP 11262).